The primary structure comprises 283 residues: Bifunctional protein FolD (283 aa).

Residues 165–167 (GRS) and Ser190 contribute to the NADP(+) site.

The protein belongs to the tetrahydrofolate dehydrogenase/cyclohydrolase family. In terms of assembly, homodimer.

It carries out the reaction (6R)-5,10-methylene-5,6,7,8-tetrahydrofolate + NADP(+) = (6R)-5,10-methenyltetrahydrofolate + NADPH. It catalyses the reaction (6R)-5,10-methenyltetrahydrofolate + H2O = (6R)-10-formyltetrahydrofolate + H(+). It participates in one-carbon metabolism; tetrahydrofolate interconversion. Its function is as follows. Catalyzes the oxidation of 5,10-methylenetetrahydrofolate to 5,10-methenyltetrahydrofolate and then the hydrolysis of 5,10-methenyltetrahydrofolate to 10-formyltetrahydrofolate. This Methylibium petroleiphilum (strain ATCC BAA-1232 / LMG 22953 / PM1) protein is Bifunctional protein FolD.